The primary structure comprises 1050 residues: Zinc finger and BTB domain-containing protein 11 (1050 aa).

Acidic residues predominate over residues Leu143–Leu156. The interval Leu143–Lys173 is disordered. The span at Ser157–Lys168 shows a compositional bias: low complexity. Residues Cys214 to Phe282 enclose the BTB domain. Disordered regions lie at residues Ala373–Tyr514 and Leu543–Glu563. Residues Glu378–Glu399 show a composition bias toward low complexity. 2 stretches are compositionally biased toward basic and acidic residues: residues Ser478 to Arg501 and Pro553 to Glu563. 2 consecutive C2H2-type zinc fingers follow at residues His566–His588 and Tyr594–His616. Residues Thr617 to Lys641 are disordered. A compositionally biased stretch (low complexity) spans Thr623–Ser638. 10 consecutive C2H2-type zinc fingers follow at residues Phe648–His670, His676–His698, Phe704–His726, Tyr732–His754, Tyr763–His785, Phe791–His813, Tyr819–His843, Arg855–His877, Phe883–His905, and Tyr911–His934.

It localises to the nucleus. Its subcellular location is the nucleolus. In terms of biological role, may be involved in transcriptional regulation. This chain is Zinc finger and BTB domain-containing protein 11, found in Mus musculus (Mouse).